Reading from the N-terminus, the 342-residue chain is Metalloendoproteinase 4-MMP (342 aa).

An N-terminal signal peptide occupies residues 1-34 (MHHHHHPCNRKPFTTIFSFFLLYLNLHNQQIIEA). Residues 35–124 (RNPSQFTTNP…KTAPFHTGKK (90 aa)) constitute a propeptide, activation peptide. The short motif at 104–111 (PRCGFPDD) is the Cysteine switch element. Positions 106 and 252 each coordinate Zn(2+). The active site involves Glu253. Zn(2+) is bound by residues His256 and His262. Asn300 carries N-linked (GlcNAc...) asparagine glycosylation. Residue Asp317 is the site of GPI-anchor amidated aspartate attachment. Positions 318–342 (GSRIRSQGMIYSTLSTVIALCFLNW) are cleaved as a propeptide — removed in mature form.

The protein belongs to the peptidase M10A family. Matrix metalloproteinases (MMPs) subfamily. The cofactor is Zn(2+). In terms of tissue distribution, mostly expressed in flowers and stems, and, to a lower extent, in leaves and roots.

It localises to the cell membrane. Repressed by acetohydroxamic acid (AHA). Functionally, matrix metalloproteinases (MMPs) or matrixins may play a role in the degradation and remodeling of the extracellular matrix (ECM) during development or in response to stresses. Active on myelin basic protein (MBP) and, to some extent, on McaPLGLDpaAR-NH(2) (QF24) and beta-casein. This chain is Metalloendoproteinase 4-MMP, found in Arabidopsis thaliana (Mouse-ear cress).